Reading from the N-terminus, the 227-residue chain is MIMKTYFSGVSTLGVHSLATEDYGFFPLSVDQKTMERMKNVLDIPATQLNISNSSLIGSLCVGNSNGLLVPNITTEKELELIKMFLKENSLDVNLERLKAKNTAFGNLILTNNKGCIISEELSRFRKTIEDVLDVESGVGNYAELPTVGSNGVATDKGCLVHPLTDELELEWIQDILRVDYVERGTANRGVTSVGACILANTKGAVVGGDTSGPEILKIEEALDLID.

It belongs to the eIF-6 family.

In terms of biological role, binds to the 50S ribosomal subunit and prevents its association with the 30S ribosomal subunit to form the 70S initiation complex. The protein is Translation initiation factor 6 of Methanococcus maripaludis (strain DSM 14266 / JCM 13030 / NBRC 101832 / S2 / LL).